The sequence spans 350 residues: Neuronal-specific septin-3 (350 aa).

Over residues Met1–Thr10 the composition is skewed to basic and acidic residues. Residues Met1 to Met29 are disordered. The Septin-type G domain maps to Thr58–Asp331. Positions Gly68–Ser75 are G1 motif. Gly68–Ser75 lines the GTP pocket. Ser91 carries the phosphoserine modification. GTP is bound at residue Thr102. The interval Asp125–Gly128 is G3 motif. The tract at residues Ala207–Asp210 is G4 motif. GTP is bound by residues Lys208–Glu216, Gly265, and Arg280. Residues Arg328–Pro350 form a disordered region.

Belongs to the TRAFAC class TrmE-Era-EngA-EngB-Septin-like GTPase superfamily. Septin GTPase family. As to quaternary structure, septins polymerize into heterooligomeric protein complexes that form filaments, and can associate with cellular membranes, actin filaments and microtubules. GTPase activity is required for filament formation. Post-translationally, phosphorylated by PKG on serine residues. Phosphorylated by PKG on Ser-91. As to expression, expressed in the brain including the cerebrum, hippocampus and cerebellum (at protein level).

The protein localises to the cytoplasm. Its subcellular location is the cytoskeleton. The protein resides in the synapse. Filament-forming cytoskeletal GTPase. May play a role in cytokinesis (Potential). In Mus musculus (Mouse), this protein is Neuronal-specific septin-3.